We begin with the raw amino-acid sequence, 286 residues long: Prohibitin-6, mitochondrial (286 aa).

At 1 to 12 (MNFKNVKVPKGP) the chain is on the mitochondrial matrix side. A helical; Signal-anchor for type II membrane protein transmembrane segment spans residues 13–35 (GGGVIAAVVIGGLSLYGATHTLY). The Mitochondrial intermembrane portion of the chain corresponds to 36–286 (NVDGGHRAIV…AMDLDVKPKK (251 aa)).

Belongs to the prohibitin family. Component of a prohibitin multimeric complex in mitochondrial membranes. As to expression, mostly expressed in proliferative tissues, including vasculature, shoot and root apical tissues.

The protein resides in the mitochondrion inner membrane. Functionally, prohibitin probably acts as a holdase/unfoldase for the stabilization of newly synthesized mitochondrial proteins. The sequence is that of Prohibitin-6, mitochondrial (PHB6) from Arabidopsis thaliana (Mouse-ear cress).